The sequence spans 407 residues: uncharacterized protein (407 aa).

Residues 10 to 37 (DKLEQLANDVVTELTDMENKYKDLHVEL) adopt a coiled-coil conformation.

This is an uncharacterized protein from Bacillus subtilis (strain 168).